The primary structure comprises 204 residues: UPF0637 protein lin1053 (204 aa).

This sequence belongs to the UPF0637 family.

This is UPF0637 protein lin1053 from Listeria innocua serovar 6a (strain ATCC BAA-680 / CLIP 11262).